A 513-amino-acid polypeptide reads, in one-letter code: Maturase K (513 aa).

This sequence belongs to the intron maturase 2 family. MatK subfamily.

Its subcellular location is the plastid. It is found in the chloroplast. Functionally, usually encoded in the trnK tRNA gene intron. Probably assists in splicing its own and other chloroplast group II introns. The polypeptide is Maturase K (Typha angustifolia (Narrow leaf cattail)).